A 499-amino-acid polypeptide reads, in one-letter code: Glycerol kinase (499 aa).

Thr-13 contacts ADP. The ATP site is built by Thr-13, Thr-14, and Ser-15. Thr-13 serves as a coordination point for sn-glycerol 3-phosphate. Residue Arg-17 participates in ADP binding. Residues Arg-83, Glu-84, Tyr-135, and Asp-244 each coordinate sn-glycerol 3-phosphate. Positions 83, 84, 135, 244, and 245 each coordinate glycerol. The ADP site is built by Thr-266 and Gly-309. Positions 266, 309, 313, and 410 each coordinate ATP. ADP contacts are provided by Gly-410 and Asn-414.

This sequence belongs to the FGGY kinase family.

The catalysed reaction is glycerol + ATP = sn-glycerol 3-phosphate + ADP + H(+). The protein operates within polyol metabolism; glycerol degradation via glycerol kinase pathway; sn-glycerol 3-phosphate from glycerol: step 1/1. Inhibited by fructose 1,6-bisphosphate (FBP). In terms of biological role, key enzyme in the regulation of glycerol uptake and metabolism. Catalyzes the phosphorylation of glycerol to yield sn-glycerol 3-phosphate. The protein is Glycerol kinase of Paraburkholderia phytofirmans (strain DSM 17436 / LMG 22146 / PsJN) (Burkholderia phytofirmans).